We begin with the raw amino-acid sequence, 253 residues long: uncharacterized protein (253 aa).

The protein belongs to the herpesviridae BTRF1 family.

This is an uncharacterized protein from Saimiriine herpesvirus 2 (strain 11) (SaHV-2).